The following is a 1289-amino-acid chain: SH3 domain and tetratricopeptide repeat-containing protein 2 (1289 aa).

SH3 domains follow at residues E176–V239 and I267–C330. The interval S393–P442 is disordered. The segment covering G414 to S424 has biased composition (low complexity). TPR repeat units lie at residues A529–A562, R758–L791, G837–M870, G1002–L1038, L1085–R1119, M1120–A1153, L1167–W1200, and A1211–M1245.

The chain is SH3 domain and tetratricopeptide repeat-containing protein 2 (Sh3tc2) from Mus musculus (Mouse).